The primary structure comprises 389 residues: MSNMVLNGNIDKSDRNSILDILQSLENIAWGQPGSARCDFRSDVITRPSLRMLSAVLKTTLGDDVFREDLTTAHFEAHVAEISGREEGMFVITGTMANQLCLHALVSTRPCGILLSSESHAIHYEAGGSSMLSGAMLQPVQPSNGKYLRVEDLEEHAILTDDVHKCPTSIVSMENTAGGAVVPVHELRRIRDWAKQNNVRTHLDGARLFEAVATGAGTLKEYCSLIDLVSVDFSKNLGAPMGAMILGDKKLIQQMRRTRKGIGGGMRQGGVITAAAREALFENFGLGAEIESQTLLQVHKVAKRLGEEWTRKGGKLSKEIETNIIWLDLDAVGIKKSQFIDKGREYGVILDGCRIVCHHQIDIYAVEALIDVFHDILKADPIKNKNSDR.

Lys235 bears the N6-(pyridoxal phosphate)lysine mark.

The protein belongs to the threonine aldolase family. Pyridoxal 5'-phosphate serves as cofactor.

The enzyme catalyses L-alanine = D-alanine. It participates in mycotoxin biosynthesis; HC-toxin biosynthesis. Its function is as follows. Alanine racemase, part of the diffuse TOX2 gene cluster that mediates the biosynthesis of the HC-toxin, cyclic tetrapeptide of structure cyclo(D-Pro-L-Ala-D-Ala-L-Aeo), where Aeo stands for 2-amino-9,10-epoxi-8-oxodecanoic acid. HC-toxin is a determinant of specificity and virulence in the interaction between the producing fungus and its host, maize. TOXG catalyzes the conversion of L-alanine into D-alanine, an essential precursor for the production of the major forms of HC-toxin by the non-ribosomal peptide synthetase HTS1. This Cochliobolus carbonum (Maize leaf spot fungus) protein is Alanine racemase TOXG.